We begin with the raw amino-acid sequence, 155 residues long: MKEDISKVVIYTDGACSGNPGPGGWGALLQFNEVNKEIFGHELETTNNRMEITAALEALKILKKPCHVEIYTDSKYLQQGITVWIHNWIKNNWCKSNNEPVKNADLWQNLYEELSKHTIIWKWVKGHASNSGNIAADKLAVQGRQTAIEILKCRG.

In terms of domain architecture, RNase H type-1 spans 4–145; that stretch reads DISKVVIYTD…ADKLAVQGRQ (142 aa). Positions 13, 51, 73, and 137 each coordinate Mg(2+).

Belongs to the RNase H family. In terms of assembly, monomer. It depends on Mg(2+) as a cofactor.

It localises to the cytoplasm. It carries out the reaction Endonucleolytic cleavage to 5'-phosphomonoester.. Functionally, endonuclease that specifically degrades the RNA of RNA-DNA hybrids. The sequence is that of Ribonuclease H from Rickettsia bellii (strain RML369-C).